The sequence spans 512 residues: ETS translocation variant 3 (512 aa).

The segment at residues 35–116 (IQLWHFILEL…KGKRFTYKFN (82 aa)) is a DNA-binding region (ETS). The interval 136-222 (VPQSAPPVPT…NAIGGGGIGH (87 aa)) is disordered. Phosphoserine occurs at positions 139, 159, and 315. A compositionally biased stretch (polar residues) spans 158 to 184 (HSPTNDVQPGRFSASSLTASGQESSNG). A disordered region spans residues 336–512 (PEESTQFSIK…QGLATAAADA (177 aa)). Residues 380–406 (IKVEPASEKDPESLRQSAREKEEHTQE) show a composition bias toward basic and acidic residues. A Glycyl lysine isopeptide (Lys-Gly) (interchain with G-Cter in SUMO2) cross-link involves residue lysine 381. Lysine 388 is subject to N6-acetyllysine; alternate. Lysine 388 is covalently cross-linked (Glycyl lysine isopeptide (Lys-Gly) (interchain with G-Cter in SUMO2); alternate). The span at 443–452 (EPLEVTEDIE) shows a compositional bias: acidic residues. Basic and acidic residues-rich tracts occupy residues 453 to 468 (DRPG…KEDA) and 479 to 491 (RWND…ELSK).

The protein belongs to the ETS family.

It is found in the nucleus. In terms of biological role, transcriptional repressor that contribute to growth arrest during terminal macrophage differentiation by repressing target genes involved in Ras-dependent proliferation. Represses MMP1 promoter activity. This chain is ETS translocation variant 3 (ETV3), found in Pan troglodytes (Chimpanzee).